Reading from the N-terminus, the 178-residue chain is Endoribonuclease YbeY (178 aa).

3 residues coordinate Zn(2+): histidine 118, histidine 122, and histidine 128.

This sequence belongs to the endoribonuclease YbeY family. Zn(2+) is required as a cofactor.

It localises to the cytoplasm. Functionally, single strand-specific metallo-endoribonuclease involved in late-stage 70S ribosome quality control and in maturation of the 3' terminus of the 16S rRNA. This is Endoribonuclease YbeY from Mycolicibacterium gilvum (strain PYR-GCK) (Mycobacterium gilvum (strain PYR-GCK)).